We begin with the raw amino-acid sequence, 293 residues long: Nucleotide-binding protein DvMF_0424 (293 aa).

Residue 13–20 (GLSGAGKS) participates in ATP binding. 65-68 (DLRE) contacts GTP.

This sequence belongs to the RapZ-like family.

Its function is as follows. Displays ATPase and GTPase activities. The sequence is that of Nucleotide-binding protein DvMF_0424 from Nitratidesulfovibrio vulgaris (strain DSM 19637 / Miyazaki F) (Desulfovibrio vulgaris).